Reading from the N-terminus, the 190-residue chain is Protein GrpE (190 aa).

Basic and acidic residues predominate over residues 1–31 (MTEEQKKYEDAENLESKSENPEEASAEKSEN). A disordered region spans residues 1–39 (MTEEQKKYEDAENLESKSENPEEASAEKSENGVEDLQAE).

This sequence belongs to the GrpE family. As to quaternary structure, homodimer.

The protein resides in the cytoplasm. Functionally, participates actively in the response to hyperosmotic and heat shock by preventing the aggregation of stress-denatured proteins, in association with DnaK and GrpE. It is the nucleotide exchange factor for DnaK and may function as a thermosensor. Unfolded proteins bind initially to DnaJ; upon interaction with the DnaJ-bound protein, DnaK hydrolyzes its bound ATP, resulting in the formation of a stable complex. GrpE releases ADP from DnaK; ATP binding to DnaK triggers the release of the substrate protein, thus completing the reaction cycle. Several rounds of ATP-dependent interactions between DnaJ, DnaK and GrpE are required for fully efficient folding. The polypeptide is Protein GrpE (Zymomonas mobilis subsp. mobilis (strain ATCC 31821 / ZM4 / CP4)).